Consider the following 349-residue polypeptide: MSSLSGKVQTVLGLVEPSKLGRTLTHEHLAMTFDCCYCPPPPCQEAISKEPIVMKNLYWIQKNAYSHKENLQLNQETEAIKEELLYFKANGGGALVENTTTGISRDTQTLKRLAEETGVHIISGAGFYVDATHSSETRAMSVEQLTDVLMNEILHGADGTSIKCGIIGEIGCSWPLTESERKVLQATAHAQAQLGCPVIIHPGRSSRAPFQIIRILQEAGADISKTVMSHLDRTILDKKELLEFAQLGCYLEYDLFGTELLHYQLGPDIDMPDDNKRIRRVRLLVEEGCEDRILVAHDIHTKTRLMKYGGHGYSHILTNVVPKMLLRGITENVLDKILIENPKQWLTFK.

A divalent metal cation is bound by residues His26, His28, Glu169, His201, His230, and Asp298.

This sequence belongs to the metallo-dependent hydrolases superfamily. Phosphotriesterase family. A divalent metal cation is required as a cofactor.

It localises to the cytoplasm. Its subcellular location is the cytosol. It catalyses the reaction N-acetyltaurine + H2O = taurine + acetate. The enzyme catalyses N-propanoyltaurine + H2O = propanoate + taurine. The catalysed reaction is N-acetyl-L-methionine + H2O = L-methionine + acetate. It carries out the reaction N-acetyl-L-isoleucine + H2O = L-isoleucine + acetate. It catalyses the reaction N-acetyl-L-leucine + H2O = L-leucine + acetate. The enzyme catalyses N-acetyl-L-valine + H2O = L-valine + acetate. Its function is as follows. N-acetyltaurine hydrolase that regulates feeding by catalyzing the hydrolysis of N-acetyltaurine into taurine and acetate. N-acetyltaurine has anorexigenic and anti-obesity effects that are dependent on GFRAL receptor and GDF15. PTER also acts on other N-acetyl amino acids (Met, Ile, Leu, Val) and N-propionyltaurine, but at lower rates. The chain is N-acetyltaurine hydrolase from Homo sapiens (Human).